Here is a 299-residue protein sequence, read N- to C-terminus: Phosphate import ATP-binding protein PstB 1 (299 aa).

The disordered stretch occupies residues 1 to 51 (MTENEMTSNDSTEPTPTTETAASSPDPSGDPLIEQSIDVEGTDSTAAETGK). Low complexity predominate over residues 10–27 (DSTEPTPTTETAASSPDP). The 241-residue stretch at 54–294 (IESSDLNVFY…PESQRVEDYI (241 aa)) folds into the ABC transporter domain. ATP is bound at residue 86 to 93 (GPSGCGKS).

It belongs to the ABC transporter superfamily. Phosphate importer (TC 3.A.1.7) family. As to quaternary structure, the complex is composed of two ATP-binding proteins (PstB), two transmembrane proteins (PstC and PstA) and a solute-binding protein (PstS).

Its subcellular location is the cell membrane. It catalyses the reaction phosphate(out) + ATP + H2O = ADP + 2 phosphate(in) + H(+). Functionally, part of the ABC transporter complex PstSACB involved in phosphate import. Responsible for energy coupling to the transport system. The chain is Phosphate import ATP-binding protein PstB 1 from Haloarcula marismortui (strain ATCC 43049 / DSM 3752 / JCM 8966 / VKM B-1809) (Halobacterium marismortui).